Consider the following 657-residue polypeptide: MTQLAIGKPTPLGAHYDGQGVNFTLFSAHAERVELCVFDANGQEHRYDLPGHSGDIWHGYLPDARPGLRYGYRVHGPWQPAEGHRFNPAKLLIDPCARQIDGEFKDNPLLHAGHNEPDYRDNAAIAPKCVVVVDHYDWEDDAPPRTPWGSTIIYEAHVKGLTYLHPEIPVEIRGTYKALGHPVMINYLKQLGITALELLPVAQFASEPRLQRMGLSNYWGYNPVAMFALHPAYACSPETALDEFRDAIKALHKAGIEVILDIVLNHSAELDLDGPLFSLRGIDNRSYYWIREDGDYHNWTGCGNTLNLSHPAVVDYASACLRYWVETCHVDGFRFDLAAVMGRTPEFRQDAPLFTAIQNCPVLSQVKLIAEPWDIAPGGYQVGNFPPLFAEWNDHFRDAARRFWLHYDLPLGVFAGRFAASSDVFKRNGRLPSAAINLVTAHDGFTLRDCVCFNHKHNEANGEENRDGTNNNYSNNHGKEGLGGTLDLVERRRDSIHALLTTLLLSQGTPMLLAGDEHGHSQHGNNNAYCQDNQLTWLDWSQASSGLTAFTAALIHLRKRIPALMENRWWEEGDGNVRWLNRYAQPLSTDEWQNGPKQLQILLSDRFLIAINATLEVTEIVLPAGEWHAIPPFAGEDNPVITAVWQGPAHGLCVFQR.

The active-site Nucleophile is D336. E371 functions as the Proton donor in the catalytic mechanism. Positions 460-479 (ANGEENRDGTNNNYSNNHGK) are disordered.

The protein belongs to the glycosyl hydrolase 13 family.

The enzyme catalyses Hydrolysis of (1-&gt;6)-alpha-D-glucosidic linkages to branches with degrees of polymerization of three or four glucose residues in limit dextrin.. The protein operates within glycan degradation; glycogen degradation. Removes maltotriose and maltotetraose chains that are attached by 1,6-alpha-linkage to the limit dextrin main chain, generating a debranched limit dextrin. The protein is Glycogen debranching enzyme of Escherichia coli O127:H6 (strain E2348/69 / EPEC).